Here is an 80-residue protein sequence, read N- to C-terminus: Large ribosomal subunit protein bL31B (80 aa).

Belongs to the bacterial ribosomal protein bL31 family. Type B subfamily. Part of the 50S ribosomal subunit.

This Methylobacillus flagellatus (strain ATCC 51484 / DSM 6875 / VKM B-1610 / KT) protein is Large ribosomal subunit protein bL31B.